The chain runs to 209 residues: C-type lectin domain family 6 member A (209 aa).

Residues 1 to 20 (MVQERHPQRKGVCWTLRLWS) are Cytoplasmic-facing. The helical; Signal-anchor for type II membrane protein transmembrane segment at 21–43 (TAVISMLLLSTCFIASCMVTYQF) threads the bilayer. Residues 44 to 209 (TMEKPNRRLS…SICETKKIYL (166 aa)) lie on the Extracellular side of the membrane. 2 disulfides stabilise this stretch: cysteine 64-cysteine 78 and cysteine 79-cysteine 90. The C-type lectin domain maps to 86–203 (FGSSCYLIST…CDSKHNSICE (118 aa)). The Ca(2+) site is built by valine 116, asparagine 118, and glutamate 122. Asparagine 131 is a glycosylation site (N-linked (GlcNAc...) asparagine). Ca(2+)-binding residues include glutamate 168, asparagine 170, and glutamate 174. Alpha-D-mannopyranose contacts are provided by residues 168–170 (EPN), glutamate 174, tryptophan 182, and 190–191 (ND). Cysteine 176 and cysteine 194 are joined by a disulfide. Ca(2+)-binding residues include asparagine 190, aspartate 191, and glutamate 203.

As to quaternary structure, associated with FCER1G. Heterodimer with CLEC4D; this heterodimer forms a pattern recognition receptor (PRR) against fungal infection.

It localises to the cell membrane. Calcium-dependent lectin that acts as a pattern recognition receptor (PRR) of the innate immune system: specifically recognizes and binds alpha-mannans on C.albicans hypheas. Binding of C.albicans alpha-mannans to this receptor complex leads to phosphorylation of the immunoreceptor tyrosine-based activation motif (ITAM) of FCER1G, triggering activation of SYK, CARD9 and NF-kappa-B, consequently driving maturation of antigen-presenting cells and shaping antigen-specific priming of T-cells toward effector T-helper 1 and T-helper 17 cell subtypes. Also recognizes, in a mannose-dependent manner, allergens from house dust mite and fungi, by promoting cysteinyl leukotriene production. Recognizes soluble elements from the eggs of Shistosoma mansoni altering adaptive immune responses. This Rattus norvegicus (Rat) protein is C-type lectin domain family 6 member A (CLEC6A).